The primary structure comprises 429 residues: Acetylornithine aminotransferase (429 aa).

Pyridoxal 5'-phosphate-binding positions include 126 to 127 (GA) and phenylalanine 160. Residue arginine 163 participates in N(2)-acetyl-L-ornithine binding. Residue 251–254 (DEVQ) participates in pyridoxal 5'-phosphate binding. N6-(pyridoxal phosphate)lysine is present on lysine 280. Serine 307 provides a ligand contact to N(2)-acetyl-L-ornithine. Residue threonine 308 participates in pyridoxal 5'-phosphate binding.

The protein belongs to the class-III pyridoxal-phosphate-dependent aminotransferase family. ArgD subfamily. Homodimer. The cofactor is pyridoxal 5'-phosphate.

The protein localises to the cytoplasm. It catalyses the reaction N(2)-acetyl-L-ornithine + 2-oxoglutarate = N-acetyl-L-glutamate 5-semialdehyde + L-glutamate. It participates in amino-acid biosynthesis; L-arginine biosynthesis; N(2)-acetyl-L-ornithine from L-glutamate: step 4/4. With respect to regulation, N-acetylornithine aminotransferase activity is stimulated by the addition of Mg(2+), Ca(2+) or Mn(2+), and inhibited by the addition of Zn(2+), Cu(2+), Co(2+) or Ni(2+). Catalyzes the reversible conversion of N-acetylornithine to N-acetylglutamate-5-semialdehyde. In vitro, also shows very low ornithine aminotransferase (OAT) and gamma-aminobutyrate aminotransferase (GABA-AT) activity, catalyzing the conversion of ornithine (Orn) to glutamate-5-semialdehyde and of gamma-aminobutyric acid (GABA) to succinate semialdehyde. It has been shown to function as a GABA-AT and contributes to closing the tricarboxylic acid cycle of Synechocystis sp. PCC6803 via the GABA shunt. However, the catalytic efficiency toward N-acetylornithine is 2500-fold and 10700-fold higher than that toward ornithine and gamma-aminobutyrate, respectively, indicating that the protein mainly functions as an N-acetylornithine aminotransferase. This is Acetylornithine aminotransferase from Synechocystis sp. (strain ATCC 27184 / PCC 6803 / Kazusa).